The sequence spans 97 residues: MKRSGCWHQRMLLSLVLLTWTHVTFSALIRSHNFSRWPKPPCKMYYPIDPDYEANCPDVKAYVCATNGLTYKNECFFCIDRWEFGPHIQFVKYGKCE.

Positions 1 to 26 (MKRSGCWHQRMLLSLVLLTWTHVTFS) are cleaved as a signal peptide. N33 carries N-linked (GlcNAc...) asparagine glycosylation. The Kazal-like domain occupies 36–97 (RWPKPPCKMY…IQFVKYGKCE (62 aa)). Disulfide bonds link C42–C78, C56–C75, and C64–C96.

It localises to the secreted. Its function is as follows. May be a serine protease inhibitor. Essential for sperm maturation and fertility. Inhibits sperm acrosome reaction, protecting sperm from premature reaction. This Mus musculus (Mouse) protein is Serine protease inhibitor Kazal-type 13 (Spink13).